We begin with the raw amino-acid sequence, 188 residues long: Elongation factor P (188 aa).

The protein belongs to the elongation factor P family.

The protein localises to the cytoplasm. It functions in the pathway protein biosynthesis; polypeptide chain elongation. In terms of biological role, involved in peptide bond synthesis. Stimulates efficient translation and peptide-bond synthesis on native or reconstituted 70S ribosomes in vitro. Probably functions indirectly by altering the affinity of the ribosome for aminoacyl-tRNA, thus increasing their reactivity as acceptors for peptidyl transferase. This chain is Elongation factor P, found in Rhodopseudomonas palustris (strain BisA53).